The sequence spans 364 residues: GDP-fucose transporter 1 (364 aa).

8 helical membrane-spanning segments follow: residues 34-56, 76-98, 111-130, 140-162, 167-185, 195-214, 227-249, and 264-286; these read FVLR…ISMV, VTFY…ATCC, LKVA…MITF, VAFY…YLLL, SFYA…WLGV, SWTG…LNAI, IWRL…LLAL, and AHFW…VTGL. The tract at residues 345 to 364 is disordered; it reads MKKTQEEPHPRENEKSNMEV.

Belongs to the TPT transporter family. SLC35C subfamily.

Its subcellular location is the golgi apparatus membrane. The catalysed reaction is GMP(out) + GDP-beta-L-fucose(in) = GMP(in) + GDP-beta-L-fucose(out). Antiporter specific for GDP-l-fucose and depending on the concomitant reverse transport of GMP. Involved in GDP-fucose import from the cytoplasm into the Golgi lumen. The sequence is that of GDP-fucose transporter 1 (SLC35C1) from Bos taurus (Bovine).